Consider the following 349-residue polypeptide: MDNHEEKRQRRVRYNGTHPKVFKEKYKELQPDKYADAVAKVIQKGSTPAGMHRSICVNEILEFLKITPGQTGLDATLGYGGHTLEMLKRLNSKGHLYAIDVDSIELPRTQERLEGLGYGSEILTIKQMNFSNIDQIALESGPLNFVLADLGVSSMQIDNPERGFSFKSEGPLDLRLNPNRGISAAARLKTISQDELQGMLLENADEPNSAAISRAIISEIKKGIDISTTTQLQQIIKDALKFIPQNTRKDEIKKSCQRCFQALRIDVNDEFEMLYEFLEKLPATLAEGGRVAILSFHSGEDRLVKKSFQRFFREGVYREIAPNFIRPSTEECNTNGRARSAKLRWAIKA.

Residues 80 to 82, Asp-100, Phe-130, Asp-149, and Gln-156 each bind S-adenosyl-L-methionine; that span reads GGH.

This sequence belongs to the methyltransferase superfamily. RsmH family.

Its subcellular location is the cytoplasm. It carries out the reaction cytidine(1402) in 16S rRNA + S-adenosyl-L-methionine = N(4)-methylcytidine(1402) in 16S rRNA + S-adenosyl-L-homocysteine + H(+). In terms of biological role, specifically methylates the N4 position of cytidine in position 1402 (C1402) of 16S rRNA. The polypeptide is Ribosomal RNA small subunit methyltransferase H 2 (Alkaliphilus metalliredigens (strain QYMF)).